Here is a 363-residue protein sequence, read N- to C-terminus: UDP-N-acetylglucosamine--N-acetylmuramyl-(pentapeptide) pyrophosphoryl-undecaprenol N-acetylglucosamine transferase (363 aa).

UDP-N-acetyl-alpha-D-glucosamine contacts are provided by residues T10–G12, N124, S195, I250, and Q295.

It belongs to the glycosyltransferase 28 family. MurG subfamily.

Its subcellular location is the cell membrane. The enzyme catalyses di-trans,octa-cis-undecaprenyl diphospho-N-acetyl-alpha-D-muramoyl-L-alanyl-D-glutamyl-meso-2,6-diaminopimeloyl-D-alanyl-D-alanine + UDP-N-acetyl-alpha-D-glucosamine = di-trans,octa-cis-undecaprenyl diphospho-[N-acetyl-alpha-D-glucosaminyl-(1-&gt;4)]-N-acetyl-alpha-D-muramoyl-L-alanyl-D-glutamyl-meso-2,6-diaminopimeloyl-D-alanyl-D-alanine + UDP + H(+). The protein operates within cell wall biogenesis; peptidoglycan biosynthesis. Cell wall formation. Catalyzes the transfer of a GlcNAc subunit on undecaprenyl-pyrophosphoryl-MurNAc-pentapeptide (lipid intermediate I) to form undecaprenyl-pyrophosphoryl-MurNAc-(pentapeptide)GlcNAc (lipid intermediate II). The protein is UDP-N-acetylglucosamine--N-acetylmuramyl-(pentapeptide) pyrophosphoryl-undecaprenol N-acetylglucosamine transferase of Halalkalibacterium halodurans (strain ATCC BAA-125 / DSM 18197 / FERM 7344 / JCM 9153 / C-125) (Bacillus halodurans).